A 311-amino-acid chain; its full sequence is MNETIQPCEHDGDTWLILNGKSAQLPEVREAVGRVREAGHHLAVRVTWEGGDGVRLAREASEAGIARVIAGGGDGTVNEIVGGLMQLASETRPALGILPLGSANDFAGGLGLPEEPYEALRVALETPPRRVDVGTLGDDYFINLASGGFGAQITNSTPAPLKRLLGGGAYSLMGMLKAWNYQPYQGRLRFPDGERNVPLFLLALGNGCQAGGGQQLAPLAKIDDGLLELLIVRHFTSLREMKQLIDELENLPESGDFVEYLQVPWVEFESEHALPLNLDGEPCFHENFRAALMPGALCLAAPEGSALLSHQ.

The DAGKc domain occupies 9 to 140 (EHDGDTWLIL…VDVGTLGDDY (132 aa)). ATP is bound by residues threonine 47, 73-79 (GDGTVNE), and serine 102. Mg(2+) contacts are provided by lysine 221, aspartate 224, and leucine 226. The active-site Proton acceptor is glutamate 281.

This sequence belongs to the diacylglycerol/lipid kinase family. YegS lipid kinase subfamily. Mg(2+) is required as a cofactor. Requires Ca(2+) as cofactor.

It localises to the cytoplasm. Its function is as follows. Probably phosphorylates lipids; the in vivo substrate is unknown. The sequence is that of Probable lipid kinase YegS-like from Chromohalobacter salexigens (strain ATCC BAA-138 / DSM 3043 / CIP 106854 / NCIMB 13768 / 1H11).